The following is a 207-amino-acid chain: PITH domain-containing protein P35G2.02 (207 aa).

Positions Glu13 to Pro189 constitute a PITH domain.

It belongs to the PITHD1 family.

It localises to the cytoplasm. The protein localises to the nucleus. This Schizosaccharomyces pombe (strain 972 / ATCC 24843) (Fission yeast) protein is PITH domain-containing protein P35G2.02.